The primary structure comprises 435 residues: Dual specificity mitogen-activated protein kinase kinase jkk-1 (435 aa).

Residues 35-49 (RDRRSTSVDQKHKEC) show a composition bias toward basic and acidic residues. The interval 35 to 90 (RDRRSTSVDQKHKECSSTSSSPQHQRPNNIGYLTSPMERKFTPLSMKPSPSRRDTE) is disordered. Residues 50–66 (SSTSSSPQHQRPNNIGY) are compositionally biased toward polar residues. The Protein kinase domain occupies 122 to 385 (IHIISLLGSG…YRQLMKHDFY (264 aa)). ATP contacts are provided by residues 128–136 (LGSGSCGVV) and K149. D246 serves as the catalytic Proton acceptor.

Belongs to the protein kinase superfamily. STE Ser/Thr protein kinase family. MAP kinase kinase subfamily. As to quaternary structure, interacts with unc-16. Mg(2+) is required as a cofactor. In terms of tissue distribution, expressed in most neurons, including nerve ring, head ganglions, dorsal and ventral nerve cords and tail ganglions.

It is found in the cytoplasm. The protein resides in the perikaryon. Its subcellular location is the cell projection. The protein localises to the axon. It catalyses the reaction L-seryl-[protein] + ATP = O-phospho-L-seryl-[protein] + ADP + H(+). The catalysed reaction is L-threonyl-[protein] + ATP = O-phospho-L-threonyl-[protein] + ADP + H(+). It carries out the reaction L-tyrosyl-[protein] + ATP = O-phospho-L-tyrosyl-[protein] + ADP + H(+). Its function is as follows. Dual specificity protein kinase which acts as an essential component of the JNK signal transduction pathway. May phosphorylate jnk-1. Plays a role in coordinating locomotion via D-type GABAergic motoneurons and in regulating synaptic vesicle transport downstream of adapter protein unc-16 and probably by activating jnk-1. Positively regulates lifespan. Upon environmental stress such as heat stress regulates daf-16 nuclear translocation probably by activating jnk-1. Regulates germline cell apoptosis in response to heavy metals such as Cu(2+) and to arsenite. The sequence is that of Dual specificity mitogen-activated protein kinase kinase jkk-1 from Caenorhabditis elegans.